Here is a 424-residue protein sequence, read N- to C-terminus: Histidine--tRNA ligase (424 aa).

This sequence belongs to the class-II aminoacyl-tRNA synthetase family. In terms of assembly, homodimer.

Its subcellular location is the cytoplasm. The enzyme catalyses tRNA(His) + L-histidine + ATP = L-histidyl-tRNA(His) + AMP + diphosphate + H(+). This chain is Histidine--tRNA ligase, found in Klebsiella pneumoniae (strain 342).